Here is a 217-residue protein sequence, read N- to C-terminus: Probable GTP-binding protein EngB (217 aa).

Residues 37 to 214 form the EngB-type G domain; sequence AGVEVAFAGR…RAAMARLIGE (178 aa). Residues 45–52, 72–76, 92–95, 159–162, and 193–195 contribute to the GTP site; these read GRSNVGKS, GRTQE, DMPG, TKAD, and TSS. Mg(2+)-binding residues include Ser52 and Thr74.

This sequence belongs to the TRAFAC class TrmE-Era-EngA-EngB-Septin-like GTPase superfamily. EngB GTPase family. Mg(2+) is required as a cofactor.

Its function is as follows. Necessary for normal cell division and for the maintenance of normal septation. The chain is Probable GTP-binding protein EngB from Nitrobacter hamburgensis (strain DSM 10229 / NCIMB 13809 / X14).